The sequence spans 210 residues: NAD(P)H-quinone oxidoreductase subunit I (210 aa).

2 consecutive 4Fe-4S ferredoxin-type domains span residues 54–83 (GRIH…VDWV) and 94–123 (YSYS…VTED). The [4Fe-4S] cluster site is built by Cys-63, Cys-66, Cys-69, Cys-73, Cys-103, Cys-106, Cys-109, and Cys-113.

Belongs to the complex I 23 kDa subunit family. In terms of assembly, NDH-1 is composed of at least 11 different subunits. It depends on [4Fe-4S] cluster as a cofactor.

The protein resides in the cellular thylakoid membrane. It catalyses the reaction a plastoquinone + NADH + (n+1) H(+)(in) = a plastoquinol + NAD(+) + n H(+)(out). It carries out the reaction a plastoquinone + NADPH + (n+1) H(+)(in) = a plastoquinol + NADP(+) + n H(+)(out). Functionally, NDH-1 shuttles electrons from an unknown electron donor, via FMN and iron-sulfur (Fe-S) centers, to quinones in the respiratory and/or the photosynthetic chain. The immediate electron acceptor for the enzyme in this species is believed to be plastoquinone. Couples the redox reaction to proton translocation, and thus conserves the redox energy in a proton gradient. The protein is NAD(P)H-quinone oxidoreductase subunit I of Synechococcus sp. (strain JA-3-3Ab) (Cyanobacteria bacterium Yellowstone A-Prime).